Consider the following 124-residue polypeptide: Large ribosomal subunit protein eL22 (124 aa).

The protein belongs to the eukaryotic ribosomal protein eL22 family. As to quaternary structure, component of the large ribosomal subunit. Mature ribosomes consist of a small (40S) and a large (60S) subunit. The 40S subunit contains about 32 different proteins and 1 molecule of RNA (18S). The 60S subunit contains 45 different proteins and 3 molecules of RNA (25S, 5.8S and 5S).

The protein resides in the cytoplasm. Its function is as follows. Component of the ribosome, a large ribonucleoprotein complex responsible for the synthesis of proteins in the cell. The small ribosomal subunit (SSU) binds messenger RNAs (mRNAs) and translates the encoded message by selecting cognate aminoacyl-transfer RNA (tRNA) molecules. The large subunit (LSU) contains the ribosomal catalytic site termed the peptidyl transferase center (PTC), which catalyzes the formation of peptide bonds, thereby polymerizing the amino acids delivered by tRNAs into a polypeptide chain. The nascent polypeptides leave the ribosome through a tunnel in the LSU and interact with protein factors that function in enzymatic processing, targeting, and the membrane insertion of nascent chains at the exit of the ribosomal tunnel. In Candida albicans (strain SC5314 / ATCC MYA-2876) (Yeast), this protein is Large ribosomal subunit protein eL22.